We begin with the raw amino-acid sequence, 329 residues long: uncharacterized protein (329 aa).

Residues 109–147 (KALGNDQTSSMTSSTTAVTVAKSGDGQQQTGEQKEEDWK) form a disordered region. Low complexity predominate over residues 116–131 (TSSMTSSTTAVTVAKS).

It to the C-terminal of MG321/MPN_456.

This is an uncharacterized protein from Mycoplasma pneumoniae (strain ATCC 29342 / M129 / Subtype 1) (Mycoplasmoides pneumoniae).